Here is a 933-residue protein sequence, read N- to C-terminus: Collagen alpha-2(I) chain (933 aa).

Residues 1-16 (SGGFDFGVGLGPGPMG) are compositionally biased toward gly residues. 2 disordered regions span residues 1-191 (SGGF…LTGA) and 206-933 (LPGP…AGVR). Low complexity predominate over residues 17–53 (LMGPRGPPGASGAPGPQGFQGPAGEPGEPGQTGPAGA). Proline 24 and proline 30 each carry 4-hydroxyproline. Positions 57 to 72 (KAGEDGHPGKPGRPGE) are enriched in basic and acidic residues. Residue lysine 94 is modified to 5-hydroxylysine; alternate. Residue lysine 94 is glycosylated (O-linked (Gal...) hydroxylysine; alternate). Low complexity-rich tracts occupy residues 108–137 (VGAP…SAGP), 162–176 (AGPR…VSGP), and 213–228 (PGPV…RGLV). The span at 280-289 (GLRGGPGSRG) shows a compositional bias: gly residues. A 4-hydroxyproline mark is found at proline 317 and proline 320. The segment covering 413-422 (GVQGGKGEQG) has biased composition (gly residues). Low complexity-rich tracts occupy residues 468–485 (PGES…SRGP) and 497–507 (EPGVVGAPGTA). A compositionally biased stretch (gly residues) spans 508-517 (GPAGSGGLPG). Composition is skewed to low complexity over residues 540–584 (VGTT…PRGS), 591–611 (VGPA…QPGA), and 627–640 (PTGP…SGPN). Residues 644-656 (GPAGGRGDGGPPG) show a composition bias toward gly residues. Positions 657-667 (LTGFPGAAGRT) are enriched in low complexity. Over residues 704–713 (GETGAGGPPG) the composition is skewed to gly residues. Low complexity-rich tracts occupy residues 721–748 (SGEP…LGLP) and 756–781 (LPGV…RGPS). The span at 795-807 (AGRDGLPGHKGER) shows a compositional bias: basic and acidic residues. Low complexity-rich tracts occupy residues 809–831 (YAGN…VGPA) and 840–860 (PGPA…PSGP). Residues 864-874 (RGDKGEGDKGP) show a composition bias toward basic and acidic residues.

Belongs to the fibrillar collagen family. As to quaternary structure, trimers of one alpha 2(I) and two alpha 1(I) chains. Interacts (via C-terminus) with TMEM131 (via PapD-L domain); the interaction is direct and is involved in assembly and TRAPPIII ER-to-Golgi transport complex-dependent secretion of collagen. In terms of processing, prolines at the third position of the tripeptide repeating unit (G-X-Y) are hydroxylated in some or all of the chains. Expressed in bones.

It localises to the secreted. The protein localises to the extracellular space. Its subcellular location is the extracellular matrix. Type I collagen is a member of group I collagen (fibrillar forming collagen). The sequence is that of Collagen alpha-2(I) chain from Glyptodon sp. (strain SLP-2019) (Giant armadillo).